Here is a 94-residue protein sequence, read N- to C-terminus: Pyrimidine/purine nucleoside phosphorylase (94 aa).

This sequence belongs to the nucleoside phosphorylase PpnP family.

The catalysed reaction is a purine D-ribonucleoside + phosphate = a purine nucleobase + alpha-D-ribose 1-phosphate. It carries out the reaction adenosine + phosphate = alpha-D-ribose 1-phosphate + adenine. It catalyses the reaction cytidine + phosphate = cytosine + alpha-D-ribose 1-phosphate. The enzyme catalyses guanosine + phosphate = alpha-D-ribose 1-phosphate + guanine. The catalysed reaction is inosine + phosphate = alpha-D-ribose 1-phosphate + hypoxanthine. It carries out the reaction thymidine + phosphate = 2-deoxy-alpha-D-ribose 1-phosphate + thymine. It catalyses the reaction uridine + phosphate = alpha-D-ribose 1-phosphate + uracil. The enzyme catalyses xanthosine + phosphate = alpha-D-ribose 1-phosphate + xanthine. In terms of biological role, catalyzes the phosphorolysis of diverse nucleosides, yielding D-ribose 1-phosphate and the respective free bases. Can use uridine, adenosine, guanosine, cytidine, thymidine, inosine and xanthosine as substrates. Also catalyzes the reverse reactions. This is Pyrimidine/purine nucleoside phosphorylase from Salmonella newport (strain SL254).